The following is a 1692-amino-acid chain: Adenylate cyclase (1692 aa).

Disordered stretches follow at residues 1-22 (MDQS…FKTG) and 103-142 (SLSD…YKEN). Positions 120–132 (ESSEKSEVPRDTR) are enriched in basic and acidic residues. Positions 174–195 (FTNLTFPEPISDDSDSVEFQRD) are required for interaction with gpa2. Residues 292 to 380 (KEFFLRVYRD…SDEEINEEDN (89 aa)) enclose the Ras-associating domain. LRR repeat units follow at residues 430–450 (ELIS…DFME), 454–474 (KLKR…PITA), 477–498 (QLEV…IFSG), 503–524 (SLKE…TRYL), 526–547 (NLTY…ITEL), 549–570 (QLET…IGSL), 572–594 (KLKH…IGLL), 596–617 (NLET…SECP), 618–639 (KLNS…NPSA), 660–681 (NLVY…VIET), 684–705 (NVET…ISAM), 707–729 (NLKY…GKLK), 730–751 (HLVH…VWQV), 753–774 (SLKV…VATS), 783–805 (QLKI…EFVM), 807–827 (TVEE…TALE), 831–852 (CLKV…FFQN), 855–876 (DLKH…STAQ), 878–899 (LLET…EALS), 901–922 (SLRF…KAEK), and 930–951 (QLEY…EDTN). A PPM-type phosphatase domain is found at 995–1275 (RYGVCGYLSR…KNVLVVIVEL (281 aa)). Residues 1332 to 1469 (AMVFTDIKNS…PVVNRTSRVV (138 aa)) enclose the Guanylate cyclase domain. Residues aspartate 1337 and aspartate 1380 each coordinate Mg(2+). Mn(2+) contacts are provided by aspartate 1337 and aspartate 1380. The segment covering 1585 to 1597 (SDSKSVHGEEGGS) has biased composition (basic and acidic residues). A disordered region spans residues 1585-1614 (SDSKSVHGEEGGSGKRSVSSLRNVSPSEST). Residues 1600 to 1614 (RSVSSLRNVSPSEST) show a composition bias toward polar residues.

Belongs to the adenylyl cyclase class-3 family. In terms of assembly, interacts (via N-terminus) with gpa2; the interaction is direct and serves to activate adenylate cyclase and cAMP-PKA signaling, to repress sexual development and gluconeogenesis. Interacts with git1. Mn(2+) is required as a cofactor.

It localises to the cytoplasm. The enzyme catalyses ATP = 3',5'-cyclic AMP + diphosphate. Activated by binding G protein gpa2. Activated by git1. In contrast to yeast cyclase, S.pombe cyclase is not likely to be regulated by RAS proteins. Its function is as follows. Acts in glucose-induced cAMP signaling by catalyzing the synthesis of the second messenger, cAMP to activate PKA signaling and repress sexual development and gluconeogenesis. The polypeptide is Adenylate cyclase (Schizosaccharomyces pombe (strain 972 / ATCC 24843) (Fission yeast)).